The chain runs to 489 residues: MSVYGLQRLYIAGAHADATSGKTFDTFDPATGELLARVQQASADDVDRAVASAREGQREWAAMTAMQRSRILRRAVELLRERNDALAELEMRDTGKPIAETRAVDIVTGADVIEYYAGLATAIEGLQVPLRPESFVYTRREPLGVCAGIGAWNYPIQIACWKSAPALAAGNAMIFKPSEVTPLSALKLAEIYTEAGVPAGVFNVVQGDGSVGALLSAHPGIAKVSFTGGVETGKKVMSLAGASSLKEVTMELGGKSPLIVFDDADLDRAADIAVTANFFSAGQVCTNGTRVFVQQAVKDAFVERVLARVARIRVGKPSDSDTNFGPLASAAQLDKVLGYIDSGKAEGAKLLAGGARLVNDHFASGQYVAPTVFGDCRDDMRIVREEIFGPVMSILSFETEDEAIARANATDYGLAAGVVTENLSRAHRAIHRLEAGICWINTWGESPAEMPVGGYKQSGVGRENGITTLEHYTRIKSVQVELGRYQPVF.

Residues T26 and D93 each contribute to the K(+) site. 150-152 (GAW) is an NAD(+) binding site. The active-site Charge relay system is the K162. Position 176–179 (176–179 (KPSE)) interacts with NAD(+). V180 is a K(+) binding site. 229–232 (GVET) lines the NAD(+) pocket. L245 provides a ligand contact to K(+). E251 acts as the Proton acceptor in catalysis. NAD(+)-binding residues include G253, C285, and E386. Residue C285 is the Nucleophile of the active site. A Cysteine sulfenic acid (-SOH) modification is found at C285. K456 and G459 together coordinate K(+). Residue E463 is the Charge relay system of the active site.

This sequence belongs to the aldehyde dehydrogenase family. Dimer of dimers. Requires K(+) as cofactor.

It catalyses the reaction betaine aldehyde + NAD(+) + H2O = glycine betaine + NADH + 2 H(+). Its pathway is amine and polyamine biosynthesis; betaine biosynthesis via choline pathway; betaine from betaine aldehyde: step 1/1. Functionally, involved in the biosynthesis of the osmoprotectant glycine betaine. Catalyzes the irreversible oxidation of betaine aldehyde to the corresponding acid. This Burkholderia pseudomallei (strain 1106a) protein is Betaine aldehyde dehydrogenase.